The sequence spans 765 residues: LPS-assembly protein LptD (765 aa).

An N-terminal signal peptide occupies residues 1–18 (MQIRYFLALSLLPQVVLA).

This sequence belongs to the LptD family. As to quaternary structure, component of the lipopolysaccharide transport and assembly complex. Interacts with LptE and LptA.

The protein resides in the cell outer membrane. Its function is as follows. Together with LptE, is involved in the assembly of lipopolysaccharide (LPS) at the surface of the outer membrane. This chain is LPS-assembly protein LptD, found in Shewanella sp. (strain ANA-3).